Consider the following 94-residue polypeptide: Small ribosomal subunit protein uS19 (94 aa).

This sequence belongs to the universal ribosomal protein uS19 family.

In terms of biological role, protein S19 forms a complex with S13 that binds strongly to the 16S ribosomal RNA. This Elusimicrobium minutum (strain Pei191) protein is Small ribosomal subunit protein uS19.